The chain runs to 404 residues: Tripartite motif-containing 13 (404 aa).

An RING-type zinc finger spans residues 10–56 (CPICCCLFEDPRVLPCSHSFCKKCLEGILDGNRSPTWRPPFKCPTCR). The segment at 87 to 129 (PRMSQCRVHSGQPLNIFCATDLKLICGFCATTGDHKGHKFCAL) adopts a B box-type zinc-finger fold. Zn(2+) is bound by residues C92, H95, C115, and H121. Residues 102-119 (IFCATDLKLICGFCATTG) traverse the membrane as a helical segment. Residues 186-236 (KLLRTLEHKRSEILSDLETLKLAVMQTFDPEINRLRSALEEQRRALNIAES) adopt a coiled-coil conformation.

The protein resides in the endoplasmic reticulum membrane. It functions in the pathway protein modification; protein ubiquitination. Its function is as follows. E3 ubiquitin ligase involved in the retrotranslocation and turnover of membrane and secretory proteins from the ER through a set of processes named ER-associated degradation (ERAD). This process acts on misfolded proteins as well as in the regulated degradation of correctly folded proteins. The polypeptide is Tripartite motif-containing 13 (trim13) (Danio rerio (Zebrafish)).